The primary structure comprises 858 residues: Protein VACUOLELESS1 (858 aa).

It belongs to the VPS16 family. As to quaternary structure, core component of at least two putative endosomal tethering complexes, the homotypic fusion and vacuole protein sorting (HOPS) complex and the class C core vacuole/endosome tethering (CORVET) complex. Their common core is composed of the class C Vps proteins VPS11, VCL1, VPS18 and VPS33, which in HOPS further associates with VPS39 and VPS41 and in CORVET with VPS3. In terms of tissue distribution, expressed in roots, leaves, stems, siliques, flowers and mature pollen.

The protein resides in the vacuole membrane. The protein localises to the prevacuolar compartment membrane. Functionally, required for vacuole biogenesis and vacuole enlargment in dividing and expanding cells. Involved in the docking or fusion of prevacuolar vesicles. Important for the function of both male and female gametophytes, but is not essential for the germination and development of pollen. The sequence is that of Protein VACUOLELESS1 (VCL1) from Arabidopsis thaliana (Mouse-ear cress).